A 482-amino-acid chain; its full sequence is Serine decarboxylase 1 (482 aa).

The tract at residues 36–55 (EVESPPRPAEEEGEGSPTRR) is disordered. H200 is a binding site for substrate. An N6-(pyridoxal phosphate)lysine modification is found at K312.

The protein belongs to the group II decarboxylase family. It depends on pyridoxal 5'-phosphate as a cofactor.

It catalyses the reaction L-serine + H(+) = ethanolamine + CO2. Catalyzes the biosynthesis of ethanolamine from serine. Decarboxylation of free serine is the major source of ethanolamine production in plants and ethanolamine metabolism is crucial for the synthesis of choline, phosphatidylethanolamine (PE) and phosphatidylcholine (PC), and thus for plant growth. This Oryza sativa subsp. japonica (Rice) protein is Serine decarboxylase 1 (SDC1).